A 224-amino-acid chain; its full sequence is Ras-related protein Rab-11C (224 aa).

A GTP-binding site is contributed by 17-24 (GDSAVGKS). Positions 39 to 47 (TKATIGVDF) match the Effector region motif. Residues 65 to 69 (DTAGQ) and 123 to 126 (NKSD) each bind GTP. The disordered stretch occupies residues 194-224 (QGKKLTPLSDPAPQLTANTTSTHQEKKSGCC). Residues C223 and C224 are each lipidated (S-geranylgeranyl cysteine).

The protein belongs to the small GTPase superfamily. Rab family.

It is found in the membrane. In Dictyostelium discoideum (Social amoeba), this protein is Ras-related protein Rab-11C (rab11C).